A 301-amino-acid polypeptide reads, in one-letter code: N-acetylmuramic acid 6-phosphate etherase (301 aa).

The 164-residue stretch at 57 to 220 folds into the SIS domain; that stretch reads TYEKMLFGGR…STSLMIKKGK (164 aa). Residue E85 is the Proton donor of the active site. The active site involves E116.

Belongs to the GCKR-like family. MurNAc-6-P etherase subfamily. Homodimer.

The catalysed reaction is N-acetyl-D-muramate 6-phosphate + H2O = N-acetyl-D-glucosamine 6-phosphate + (R)-lactate. Its pathway is amino-sugar metabolism; N-acetylmuramate degradation. Its function is as follows. Specifically catalyzes the cleavage of the D-lactyl ether substituent of MurNAc 6-phosphate, producing GlcNAc 6-phosphate and D-lactate. This chain is N-acetylmuramic acid 6-phosphate etherase, found in Clostridium botulinum (strain Eklund 17B / Type B).